Here is an 84-residue protein sequence, read N- to C-terminus: Esculentin-1SIa (84 aa).

Residues 1–22 (MFTLKKPLLLIVLLGIISLSLC) form the signal peptide. A propeptide spans 23–36 (EQERAADEDEGSEI) (removed in mature form). Cys-78 and Cys-84 are joined by a disulfide.

In terms of tissue distribution, expressed by the skin glands.

It is found in the secreted. Its function is as follows. Has antimicrobial activity against Gram-negative bacterium E.coli ATCC 8739 (MIC=6.3 ug), against Gram positive bacteria S.aureus ATCC 6538 (MIC=3.1 ug), methicillin-resistant S.aureus ATCC 43300 (MIC=25 ug) and B.subtilis ATCC 6633 (MIC=25 ug). Has no activity against fungus C.albicans ATCC 90028. The polypeptide is Esculentin-1SIa (Odorrana ishikawae (Ishikawa's frog)).